Consider the following 395-residue polypeptide: 8-amino-3,8-dideoxy-alpha-D-manno-octulosonate transaminase (395 aa).

K186 is subject to N6-(pyridoxal phosphate)lysine.

The protein belongs to the DegT/DnrJ/EryC1 family. The cofactor is pyridoxal 5'-phosphate.

The catalysed reaction is 8-amino-3,8-dideoxy-alpha-D-manno-octulosonate + 2-oxoglutarate = 3,8-dideoxy-8-oxo-alpha-D-manno-octulosonate + L-glutamate. It participates in bacterial outer membrane biogenesis; lipopolysaccharide biosynthesis. Catalyzes the second (last) step of the biosynthesis of Kdo8N (8-amino-3,8-dideoxy-D-manno-octulosonate) from Kdo (3-deoxy-D-manno-octulosonate). In Shewanella oneidensis (strain ATCC 700550 / JCM 31522 / CIP 106686 / LMG 19005 / NCIMB 14063 / MR-1), this protein is 8-amino-3,8-dideoxy-alpha-D-manno-octulosonate transaminase.